Reading from the N-terminus, the 243-residue chain is PF03932 family protein CutC (243 aa).

Belongs to the CutC family.

Its subcellular location is the cytoplasm. This chain is PF03932 family protein CutC, found in Glaesserella parasuis serovar 5 (strain SH0165) (Haemophilus parasuis).